A 101-amino-acid polypeptide reads, in one-letter code: UPF0213 protein lp_2058 (101 aa).

Residues 15-92 (KKYYFYVLLC…KHQSRAAKLK (78 aa)) enclose the GIY-YIG domain.

This sequence belongs to the UPF0213 family.

The sequence is that of UPF0213 protein lp_2058 from Lactiplantibacillus plantarum (strain ATCC BAA-793 / NCIMB 8826 / WCFS1) (Lactobacillus plantarum).